Consider the following 208-residue polypeptide: CASP-like protein 2A1 (208 aa).

Residues 1–36 (MSKMAEQKAAAVDGLGGAGAADAAPAGEAAAARVRP) lie on the Cytoplasmic side of the membrane. The chain crosses the membrane as a helical span at residues 37–57 (VETLLRAAPLGLCVAAMTVML). The Extracellular portion of the chain corresponds to 58–78 (RDQQSNEYGTVAYSDLGGFKY). The helical transmembrane segment at 79-99 (LVYANGLCAAYSLVSAFYTAV) threads the bilayer. Residues 100 to 108 (PRPATVSRS) are Cytoplasmic-facing. The chain crosses the membrane as a helical span at residues 109-129 (WVVFLLDQVFTYLILAAGAAA). Residues 130 to 161 (AELLYLAYNGDKEVTWSEACGVFGSFCRQART) lie on the Extracellular side of the membrane. A helical membrane pass occupies residues 162 to 182 (SVAITFGTVLCFILLSLISSY). Topologically, residues 183-208 (RLFSAYEAPPSSALGSKGVEIAAYPR) are cytoplasmic.

Belongs to the Casparian strip membrane proteins (CASP) family. Homodimer and heterodimers.

It localises to the cell membrane. In Sorghum bicolor (Sorghum), this protein is CASP-like protein 2A1.